Consider the following 313-residue polypeptide: Hydroxyphenylpyruvate reductase (313 aa).

Residues 152–155 (LGRI), 174–176 (SRS), and Ile230 contribute to the NADP(+) site. Arg232 is an active-site residue. Asp256 serves as a coordination point for NADP(+). Residue Glu261 is part of the active site. The active-site Proton donor is the His279.

This sequence belongs to the D-isomer specific 2-hydroxyacid dehydrogenase family.

The catalysed reaction is (2R)-2-hydroxy-3-(4-hydroxyphenyl)propanoate + NAD(+) = 3-(4-hydroxyphenyl)pyruvate + NADH + H(+). The enzyme catalyses (2R)-2-hydroxy-3-(4-hydroxyphenyl)propanoate + NADP(+) = 3-(4-hydroxyphenyl)pyruvate + NADPH + H(+). It carries out the reaction (2R)-3-(3,4-dihydroxyphenyl)lactate + NADP(+) = 3-(3,4-dihydroxyphenyl)pyruvate + NADPH + H(+). It catalyses the reaction (2R)-3-(3,4-dihydroxyphenyl)lactate + NAD(+) = 3-(3,4-dihydroxyphenyl)pyruvate + NADH + H(+). Functionally, catalyzes the NAD(P)H-dependent reduction of 4-hydroxyphenylpyruvate to 4-hydroxyphenyllactate and 3,4-dihydroxyphenylpyruvate to 3,4-dihydroxyphenyllactate in the biosynthesis of rosmarinic acid. Rosmarinic acid is an ester of caffeic acid and 3,4-dihydroxyphenyllactic acid. NADP is the preferred substrate. This is Hydroxyphenylpyruvate reductase (HPPR) from Plectranthus scutellarioides (Coleus).